Here is a 997-residue protein sequence, read N- to C-terminus: Sarcoplasmic/endoplasmic reticulum calcium ATPase 2 (997 aa).

Residues 1 to 48 (MENAHTKTVEEVLGYFGVNESTGLSLEQVKKLKERWGSNELPAEEGKT) are Cytoplasmic-facing. Position 38 is a phosphoserine (Ser-38). A helical membrane pass occupies residues 49 to 69 (LLELVIEQFEDLLVRILLLAA). The Lumenal portion of the chain corresponds to 70–89 (CISFVLAWFEEGEETITAFV). Residues 90–110 (EPFVILLILVANAIVGVWQER) form a helical membrane-spanning segment. The Cytoplasmic portion of the chain corresponds to 111–253 (NAENAIEALK…QERTPLQQKL (143 aa)). The helical transmembrane segment at 254-273 (DEFGEQLSKVISLICIAVWI) threads the bilayer. The Lumenal segment spans residues 274–295 (INIGHFNDPVHGGSWIRGAIYY). 3'-nitrotyrosine occurs at positions 294 and 295. Residues 296 to 313 (FKIAVALAVAAIPEGLPA) traverse the membrane as a helical segment. Residues Val-304, Ala-305, Ile-307, and Glu-309 each contribute to the Ca(2+) site. Residues 314 to 756 (VITTCLALGT…EEGRAIYNNM (443 aa)) lie on the Cytoplasmic side of the membrane. Asp-351 functions as the 4-aspartylphosphate intermediate in the catalytic mechanism. Asp-351 and Thr-353 together coordinate Mg(2+). Thr-353 is a binding site for ATP. Residue Thr-441 is modified to Phosphothreonine. ATP is bound by residues Glu-442, Arg-489, and Lys-514. The residue at position 531 (Ser-531) is a Phosphoserine. Arg-559 lines the ATP pocket. Residues 575 to 594 (MNLEDSANFIKYETNLTFVG) are interaction with HAX1. Ser-580 carries the post-translational modification Phosphoserine. ATP-binding residues include Thr-624, Gly-625, and Asp-626. 2 positions are modified to phosphoserine: Ser-661 and Ser-663. Arg-677 and Lys-683 together coordinate ATP. Position 702 (Asp-702) interacts with Mg(2+). Asn-705 lines the ATP pocket. Residues 757-776 (KQFIRYLISSNVGEVVCIFL) traverse the membrane as a helical segment. Ca(2+)-binding residues include Asn-767 and Glu-770. The Lumenal segment spans residues 777 to 786 (TAALGFPEAL). A helical transmembrane segment spans residues 787–807 (IPVQLLWVNLVTDGLPATALG). The interaction with PLN stretch occupies residues 787-807 (IPVQLLWVNLVTDGLPATALG). The tract at residues 788-997 (PVQLLWVNLV…RNYLEPAILE (210 aa)) is interaction with TMEM64 and PDIA3. Ca(2+) is bound by residues Asn-795, Thr-798, and Asp-799. The Cytoplasmic portion of the chain corresponds to 808-827 (FNPPDLDIMNKPPRNPKEPL). Residues 828 to 850 (ISGWLFFRYLAIGCYVGAATVGA) traverse the membrane as a helical segment. At 851–896 (AAWWFIAADGGPRVSFYQLSHFLQCKDDNPDFEGVDCAIFESPYPM) the chain is on the lumenal side. A disulfide bond links Cys-875 and Cys-887. Residues 897–916 (TMALSVLVTIEMCNALNSLS) form a helical membrane-spanning segment. Residue Glu-907 coordinates Ca(2+). Topologically, residues 917 to 929 (ENQSLLRMPPWEN) are cytoplasmic. A helical membrane pass occupies residues 930 to 948 (IWLVGSICLSMSLHFLILY). The segment at 931 to 942 (WLVGSICLSMSL) is interaction with PLN. Residues 949–963 (VEPLPLIFQITPLNL) are Lumenal-facing. Residues 964-984 (TQWLMVLKISLPVILMDETLK) form a helical membrane-spanning segment. At 985–997 (FVARNYLEPAILE) the chain is on the cytoplasmic side.

It belongs to the cation transport ATPase (P-type) (TC 3.A.3) family. Type IIA subfamily. As to quaternary structure, interacts with sarcolipin (SLN); the interaction inhibits ATP2A2 Ca(2+) affinity. Interacts with phospholamban (PLN); the interaction inhibits ATP2A2 Ca(2+) affinity. Interacts with myoregulin (MRLN). Interacts with ARLN and ERLN; the interactions inhibit ATP2A2 Ca(2+) affinity. Interacts with STRIT1/DWORF; the interaction results in activation of ATP2A2. Interacts with the monomeric forms of SLN, PLN, ARLN, ERLN and STRI1/DWORF. Interacts with HAX1. Interacts with S100A8 and S100A9. Interacts with SLC35G1 and STIM1. Interacts with TMEM203. Interacts with TMEM64 and PDIA3. Interacts with TMX1. Interacts with TMX2. Interacts with VMP1; VMP1 competes with PLN and SLN to prevent them from forming an inhibitory complex with ATP2A2. Interacts with ULK1. Interacts with S100A1 in a Ca(2+)-dependent manner. Interacts with TUNAR. Interacts with FLVCR2; this interaction occurs in the absence of heme and promotes ATP2A2 proteasomal degradation; this complex is dissociated upon heme binding. Interacts with FNIP1. Interacts with TRAM2 (via C-terminus). The cofactor is Mg(2+). In terms of processing, nitrated under oxidative stress. Nitration on the two tyrosine residues inhibits catalytic activity. Serotonylated on Gln residues by TGM2 in response to hypoxia, leading to its inactivation. As to expression, isoform 1 is expressed in the heart.

The protein resides in the endoplasmic reticulum membrane. It is found in the sarcoplasmic reticulum membrane. The enzyme catalyses Ca(2+)(in) + ATP + H2O = Ca(2+)(out) + ADP + phosphate + H(+). With respect to regulation, has different conformational states with differential Ca2+ affinity. The E1 conformational state (active form) shows high Ca(2+) affinity, while the E2 state exhibits low Ca(2+) affinity. Binding of ATP allosterically increases its affinity for subsequent binding of Ca2+. Reversibly inhibited by phospholamban (PLN) at low calcium concentrations. PLN inhibits ATP2A2 Ca(2+) affinity by disrupting its allosteric activation by ATP. Inhibited by sarcolipin (SLN) and myoregulin (MRLN). The inhibition is blocked by VMP1. Enhanced by STRIT1/DWORF; STRIT1 increases activity by displacing sarcolipin (SLN), phospholamban (PLN) and myoregulin (MRLN). Stabilizes SERCA2 in its E2 state. In terms of biological role, this magnesium-dependent enzyme catalyzes the hydrolysis of ATP coupled with the translocation of calcium from the cytosol to the sarcoplasmic reticulum lumen. Involved in autophagy in response to starvation. Upon interaction with VMP1 and activation, controls ER-isolation membrane contacts for autophagosome formation. Also modulates ER contacts with lipid droplets, mitochondria and endosomes. In coordination with FLVCR2 mediates heme-stimulated switching from mitochondrial ATP synthesis to thermogenesis. Involved in the regulation of the contraction/relaxation cycle. Acts as a regulator of TNFSF11-mediated Ca(2+) signaling pathways via its interaction with TMEM64 which is critical for the TNFSF11-induced CREB1 activation and mitochondrial ROS generation necessary for proper osteoclast generation. Association between TMEM64 and SERCA2 in the ER leads to cytosolic Ca(2+) spiking for activation of NFATC1 and production of mitochondrial ROS, thereby triggering Ca(2+) signaling cascades that promote osteoclast differentiation and activation. The chain is Sarcoplasmic/endoplasmic reticulum calcium ATPase 2 (ATP2A2) from Felis catus (Cat).